The following is a 256-amino-acid chain: Imidazole glycerol phosphate synthase subunit HisF (256 aa).

Active-site residues include Asp-12 and Asp-131.

Belongs to the HisA/HisF family. Heterodimer of HisH and HisF.

The protein resides in the cytoplasm. The catalysed reaction is 5-[(5-phospho-1-deoxy-D-ribulos-1-ylimino)methylamino]-1-(5-phospho-beta-D-ribosyl)imidazole-4-carboxamide + L-glutamine = D-erythro-1-(imidazol-4-yl)glycerol 3-phosphate + 5-amino-1-(5-phospho-beta-D-ribosyl)imidazole-4-carboxamide + L-glutamate + H(+). The protein operates within amino-acid biosynthesis; L-histidine biosynthesis; L-histidine from 5-phospho-alpha-D-ribose 1-diphosphate: step 5/9. IGPS catalyzes the conversion of PRFAR and glutamine to IGP, AICAR and glutamate. The HisF subunit catalyzes the cyclization activity that produces IGP and AICAR from PRFAR using the ammonia provided by the HisH subunit. The chain is Imidazole glycerol phosphate synthase subunit HisF from Pseudomonas syringae pv. tomato (strain ATCC BAA-871 / DC3000).